The chain runs to 445 residues: 3-phosphoshikimate 1-carboxyvinyltransferase (445 aa).

3-phosphoshikimate-binding residues include Lys-25, Ser-26, and Arg-30. Lys-25 serves as a coordination point for phosphoenolpyruvate. Phosphoenolpyruvate contacts are provided by Gly-98 and Arg-126. 4 residues coordinate 3-phosphoshikimate: Ser-171, Gln-173, Asp-324, and Lys-351. A phosphoenolpyruvate-binding site is contributed by Gln-173. Residue Asp-324 is the Proton acceptor of the active site. Phosphoenolpyruvate is bound by residues Arg-355 and Arg-398.

It belongs to the EPSP synthase family. Monomer.

The protein localises to the cytoplasm. The enzyme catalyses 3-phosphoshikimate + phosphoenolpyruvate = 5-O-(1-carboxyvinyl)-3-phosphoshikimate + phosphate. It functions in the pathway metabolic intermediate biosynthesis; chorismate biosynthesis; chorismate from D-erythrose 4-phosphate and phosphoenolpyruvate: step 6/7. Catalyzes the transfer of the enolpyruvyl moiety of phosphoenolpyruvate (PEP) to the 5-hydroxyl of shikimate-3-phosphate (S3P) to produce enolpyruvyl shikimate-3-phosphate and inorganic phosphate. This Hydrogenovibrio crunogenus (strain DSM 25203 / XCL-2) (Thiomicrospira crunogena) protein is 3-phosphoshikimate 1-carboxyvinyltransferase.